Consider the following 1651-residue polypeptide: Alsin (1651 aa).

3 RCC1 repeats span residues 59–108, 109–167, and 169–218; these read DGEV…AVTE, SGVV…ALSL, and REIW…ALVQ. A disordered region spans residues 425 to 462; it reads ETAAQSGSASTGPESLKDLREEQVKQESLQGKKSSSLM. Polar residues predominate over residues 427-437; it reads AAQSGSASTGP. Residues 439 to 449 show a composition bias toward basic and acidic residues; it reads SLKDLREEQVK. Polar residues predominate over residues 450 to 461; it reads QESLQGKKSSSL. 4 positions are modified to phosphoserine: serine 459, serine 460, serine 477, and serine 486. Threonine 504 is modified (phosphothreonine). 2 RCC1 repeats span residues 519-570 and 572-621; these read RTEV…ALTA and SQVY…FLVD. At lysine 527 the chain carries N6-acetyllysine. The DH domain occupies 684–879; that stretch reads GYIASLHELA…ESLALHLGKK (196 aa). Positions 895–1001 constitute a PH domain; sequence GKMTDSLRKP…RAISQAVDQA (107 aa). MORN repeat units lie at residues 1043–1065, 1066–1088, 1094–1116, 1117–1139, 1145–1167, 1169–1191, 1192–1214, and 1215–1238; these read YDGR…DGKM, YSGM…NKAL, YVGH…SGEV, FEGC…KLTS, FIGQ…TRGE, YMGM…FGLY, YEGN…DDTI, and YEGE…HGDY. Residue serine 1329 is modified to Phosphoserine. The VPS9 domain maps to 1507–1651; the sequence is KQPDIALLGF…YFQIQREKLN (145 aa).

In terms of assembly, forms a heteromeric complex with ALS2CL. Interacts with ALS2CL.

In terms of biological role, may act as a GTPase regulator. Controls survival and growth of spinal motoneurons. The protein is Alsin (Als2) of Mus musculus (Mouse).